Consider the following 107-residue polypeptide: Integration host factor subunit alpha (107 aa).

Belongs to the bacterial histone-like protein family. Heterodimer of an alpha and a beta chain.

In terms of biological role, this protein is one of the two subunits of integration host factor, a specific DNA-binding protein that functions in genetic recombination as well as in transcriptional and translational control. The polypeptide is Integration host factor subunit alpha (Brucella abortus (strain S19)).